Reading from the N-terminus, the 485-residue chain is Warthog protein 1 (485 aa).

A signal peptide spans 1–21; that stretch reads MMVMNPLTATFLAALIGTAAS. A disordered region spans residues 236 to 258; sequence DQRLSPSTDVQSDSYVSPTEADP. Residues 239–252 show a composition bias toward polar residues; sequence LSPSTDVQSDSYVS.

This sequence belongs to the hedgehog family. Post-translationally, the C-terminal domain displays an autoproteolysis activity.

The protein resides in the secreted. It localises to the cell surface. Its subcellular location is the cell membrane. The protein localises to the extracellular space. Intercellular signal essential for a variety of patterning events during development. The polypeptide is Warthog protein 1 (wrt-1) (Caenorhabditis elegans).